The chain runs to 121 residues: Large-conductance mechanosensitive channel (121 aa).

2 consecutive transmembrane segments (helical) span residues 14-34 (VLDL…VKSL) and 67-87 (GAFL…FVLI).

The protein belongs to the MscL family. In terms of assembly, homopentamer.

It localises to the cell membrane. Channel that opens in response to stretch forces in the membrane lipid bilayer. May participate in the regulation of osmotic pressure changes within the cell. This Lactococcus lactis subsp. cremoris (strain SK11) protein is Large-conductance mechanosensitive channel.